The following is a 366-amino-acid chain: Ribosomal RNA large subunit methyltransferase M (366 aa).

S-adenosyl-L-methionine is bound by residues Ser188, Cys221–Gly224, Asp240, Asp260, and Asp277. The active-site Proton acceptor is the Lys306.

This sequence belongs to the class I-like SAM-binding methyltransferase superfamily. RNA methyltransferase RlmE family. RlmM subfamily. Monomer.

The protein resides in the cytoplasm. It carries out the reaction cytidine(2498) in 23S rRNA + S-adenosyl-L-methionine = 2'-O-methylcytidine(2498) in 23S rRNA + S-adenosyl-L-homocysteine + H(+). Catalyzes the 2'-O-methylation at nucleotide C2498 in 23S rRNA. The chain is Ribosomal RNA large subunit methyltransferase M from Photorhabdus laumondii subsp. laumondii (strain DSM 15139 / CIP 105565 / TT01) (Photorhabdus luminescens subsp. laumondii).